The sequence spans 1163 residues: DNA-directed RNA polymerase subunit beta' (1163 aa).

4 residues coordinate Zn(2+): cysteine 59, cysteine 61, cysteine 74, and cysteine 77. Mg(2+)-binding residues include aspartate 449, aspartate 451, and aspartate 453. 4 residues coordinate Zn(2+): cysteine 794, cysteine 868, cysteine 875, and cysteine 878.

The protein belongs to the RNA polymerase beta' chain family. In terms of assembly, the RNAP catalytic core consists of 2 alpha, 1 beta, 1 beta' and 1 omega subunit. When a sigma factor is associated with the core the holoenzyme is formed, which can initiate transcription. Mg(2+) serves as cofactor. Requires Zn(2+) as cofactor.

The catalysed reaction is RNA(n) + a ribonucleoside 5'-triphosphate = RNA(n+1) + diphosphate. Functionally, DNA-dependent RNA polymerase catalyzes the transcription of DNA into RNA using the four ribonucleoside triphosphates as substrates. The chain is DNA-directed RNA polymerase subunit beta' from Caldicellulosiruptor saccharolyticus (strain ATCC 43494 / DSM 8903 / Tp8T 6331).